Reading from the N-terminus, the 282-residue chain is Probable endonuclease 4 (282 aa).

Residues His-69, His-109, Glu-145, Asp-179, His-182, His-216, Asp-229, His-231, and Glu-261 each coordinate Zn(2+).

The protein belongs to the AP endonuclease 2 family. Zn(2+) is required as a cofactor.

It carries out the reaction Endonucleolytic cleavage to 5'-phosphooligonucleotide end-products.. Functionally, endonuclease IV plays a role in DNA repair. It cleaves phosphodiester bonds at apurinic or apyrimidinic (AP) sites, generating a 3'-hydroxyl group and a 5'-terminal sugar phosphate. This Chlorobium chlorochromatii (strain CaD3) protein is Probable endonuclease 4.